We begin with the raw amino-acid sequence, 473 residues long: 3-isopropylmalate dehydratase large subunit (473 aa).

[4Fe-4S] cluster is bound by residues Cys-351, Cys-414, and Cys-417.

This sequence belongs to the aconitase/IPM isomerase family. LeuC type 1 subfamily. In terms of assembly, heterodimer of LeuC and LeuD. The cofactor is [4Fe-4S] cluster.

The enzyme catalyses (2R,3S)-3-isopropylmalate = (2S)-2-isopropylmalate. It functions in the pathway amino-acid biosynthesis; L-leucine biosynthesis; L-leucine from 3-methyl-2-oxobutanoate: step 2/4. Catalyzes the isomerization between 2-isopropylmalate and 3-isopropylmalate, via the formation of 2-isopropylmaleate. In Paracidovorax citrulli (strain AAC00-1) (Acidovorax citrulli), this protein is 3-isopropylmalate dehydratase large subunit.